The following is a 157-amino-acid chain: MYLDINWEEDSIPENERGSLTGLLEQGIAKAVHLSAESEEAEVSLTLVDDARIHELNRDYRGVDRPTDVLSFALQEERSDEPDILDYEDHLLGDIIISVERARAQAIDYGHSFERELVYLAVHGTLHLLGYDHMEEADKEKMRRQEEAVMSQIGLLR.

Zn(2+) contacts are provided by H123, H127, and H133.

This sequence belongs to the endoribonuclease YbeY family. The cofactor is Zn(2+).

It localises to the cytoplasm. In terms of biological role, single strand-specific metallo-endoribonuclease involved in late-stage 70S ribosome quality control and in maturation of the 3' terminus of the 16S rRNA. In Desulfitobacterium hafniense (strain Y51), this protein is Endoribonuclease YbeY.